A 931-amino-acid polypeptide reads, in one-letter code: MGKGLEGTAARCGLGMGYLLHSVVLPALAVLGASRPGSAAQDDDFFHELPETFPSDPPEPLPHFLIEPEEAYIVKNKPVNLYCKASPATQIYFKCNSEWVHQKDHVVDERVDETSGLIVCEVSIEISRQQVEELFGPEDYWCQCVAWSSAGTTKSRKAYVRIAYLRKTFEQEPLGKEVSLEQEVLLQCRPPEGIPVAEVEWLKNEEVIDPVEDRNFYITIDHNLIIKQARLSDTANYTCVAKNIVAKRKSTTATVIVYVNGGWSTWTEWSACNSRCGRGFQKRTRTCTNPAPLNGGAFCEGQNVQKIACTTLCPVDGKWTSWSKWSTCGTECTHWRRRECTAPAPKNGGKDCEGLVLQSKNCTDGLCMQAAPDSDDVALYVGIVIAVIVCLAISVVVALFVYRKNHRDFESDIIDSSALNGGFQPVNIKAARQDLLAVPPDLTSAAAMYRGPVYALHDVSDKIPMTNSPILDPLPNLKIKVYNTSGAVTPQDELSDFSSKLSPQITQSLLENETLNVKNQSLARQTDPSCTAFGTFNSLGGHLVIPNSGVSLLIPAGAVPQGRVYEMYVTVHRKEGMRPPVEDSQTLLTPVVSCGPPGALLTRPVVLTMHHCAEPNMDDWQIQLKHQAGQGPWEDVVVVGEENFTTPCYIQLDPEACHILTETLSTYALVGQSITKAAAKRLKLAIFGPLSCSSLEYSIRVYCLDDTQDALKEVLQLERQMGGQLLEEPKTLHFKGSTHNLRLSIHDIAHSLWKSKLPAKYQEIPFYHIWSGCQRNLHCTFTLERFSLNTLELVCKLCVRQVEGEGQIFQLNCSVSEEPTGIDYPIMDSAGSITTIVGPNAFSIPLPIRQKLCSSLDAPQTRGHDWRMLAHKLKLDRYLNYFATKSSPTGVILDLWEAQNFPDGNLSMLAAVLEEMGRHETVVSLAAEGNY.

The N-terminal stretch at 1 to 39 (MGKGLEGTAARCGLGMGYLLHSVVLPALAVLGASRPGSA) is a signal peptide. Residues 40–380 (AQDDDFFHEL…APDSDDVALY (341 aa)) lie on the Extracellular side of the membrane. One can recognise an Ig-like domain in the interval 62–159 (PHFLIEPEEA…AGTTKSRKAY (98 aa)). 9 cysteine pairs are disulfide-bonded: Cys83–Cys144, Cys95–Cys142, Cys188–Cys239, Cys272–Cys309, Cys276–Cys313, Cys287–Cys299, Cys328–Cys362, Cys332–Cys367, and Cys340–Cys352. Positions 161 to 256 (RIAYLRKTFE…KRKSTTATVI (96 aa)) constitute an Ig-like C2-type domain. Asn236 carries an N-linked (GlcNAc...) asparagine glycan. 2 consecutive TSP type-1 domains span residues 260-314 (NGGW…TLCP) and 316-368 (DGKW…GLCM). Asn361 carries an N-linked (GlcNAc...) asparagine glycan. A helical transmembrane segment spans residues 381–401 (VGIVIAVIVCLAISVVVALFV). Residues 402–931 (YRKNHRDFES…VVSLAAEGNY (530 aa)) are Cytoplasmic-facing. The ZU5 domain maps to 530–664 (CTAFGTFNSL…EACHILTETL (135 aa)). Residues 850-929 (QKLCSSLDAP…ETVVSLAAEG (80 aa)) form the Death domain.

The protein belongs to the unc-5 family. Restricted to proprioceptive neurons.

The protein resides in the cell membrane. It localises to the cell surface. Its subcellular location is the synapse. The protein localises to the synaptosome. It is found in the cell projection. The protein resides in the axon. It localises to the dendrite. Its subcellular location is the growth cone. The protein localises to the lamellipodium. It is found in the filopodium. Its function is as follows. Receptor for netrin required for axon guidance. Mediates axon repulsion of neuronal growth cones in the developing nervous system upon ligand binding. Involved in dorsal root ganglion axon projection towards the spinal cord. This chain is Netrin receptor UNC5C (UNC5C), found in Gallus gallus (Chicken).